A 506-amino-acid polypeptide reads, in one-letter code: Galactose/methyl galactoside import ATP-binding protein MglA (506 aa).

ABC transporter domains lie at 14-249 (LEMS…VGRS) and 264-506 (VILE…SLHL). 46-53 (GENGAGKS) is an ATP binding site.

The protein belongs to the ABC transporter superfamily. Galactose/methyl galactoside importer (TC 3.A.1.2.3) family. The complex is composed of one ATP-binding protein (MglA), two transmembrane proteins (MglC) and a solute-binding protein (MglB).

The protein localises to the cell inner membrane. It carries out the reaction D-galactose(out) + ATP + H2O = D-galactose(in) + ADP + phosphate + H(+). It catalyses the reaction methyl beta-D-galactoside(out) + ATP + H2O = methyl beta-D-galactoside(in) + ADP + phosphate + H(+). In terms of biological role, part of the ABC transporter complex MglABC involved in galactose/methyl galactoside import. Responsible for energy coupling to the transport system. The chain is Galactose/methyl galactoside import ATP-binding protein MglA from Escherichia coli O157:H7.